We begin with the raw amino-acid sequence, 255 residues long: DNA repair protein RecO (255 aa).

The protein belongs to the RecO family.

Involved in DNA repair and RecF pathway recombination. The chain is DNA repair protein RecO from Bacillus velezensis (strain DSM 23117 / BGSC 10A6 / LMG 26770 / FZB42) (Bacillus amyloliquefaciens subsp. plantarum).